A 165-amino-acid polypeptide reads, in one-letter code: NADPH-dependent 7-cyano-7-deazaguanine reductase (165 aa).

Cys-56 (thioimide intermediate) is an active-site residue. Asp-63 serves as the catalytic Proton donor. Residues 78–80 (VES) and 97–98 (HE) contribute to the substrate site.

This sequence belongs to the GTP cyclohydrolase I family. QueF type 1 subfamily.

It localises to the cytoplasm. The enzyme catalyses 7-aminomethyl-7-carbaguanine + 2 NADP(+) = 7-cyano-7-deazaguanine + 2 NADPH + 3 H(+). It participates in tRNA modification; tRNA-queuosine biosynthesis. Catalyzes the NADPH-dependent reduction of 7-cyano-7-deazaguanine (preQ0) to 7-aminomethyl-7-deazaguanine (preQ1). In Bacillus thuringiensis subsp. konkukian (strain 97-27), this protein is NADPH-dependent 7-cyano-7-deazaguanine reductase.